Here is a 267-residue protein sequence, read N- to C-terminus: Type II pantothenate kinase (267 aa).

6-13 (DAGGTLIK) is an ATP binding site. The active-site Proton acceptor is the glutamate 70. Residues threonine 99, 121 to 125 (GGMIQ), tyrosine 137, and serine 225 contribute to the ATP site.

This sequence belongs to the type II pantothenate kinase family. In terms of assembly, homodimer.

The protein localises to the cytoplasm. The catalysed reaction is (R)-pantothenate + ATP = (R)-4'-phosphopantothenate + ADP + H(+). Its pathway is cofactor biosynthesis; coenzyme A biosynthesis; CoA from (R)-pantothenate: step 1/5. In terms of biological role, catalyzes the phosphorylation of pantothenate (Pan), the first step in CoA biosynthesis. The chain is Type II pantothenate kinase from Staphylococcus aureus (strain USA300).